Consider the following 820-residue polypeptide: Cation/H(+) antiporter 17 (820 aa).

The next 12 membrane-spanning stretches (helical) occupy residues 30-50, 58-75, 90-110, 124-144, 159-179, 192-212, 222-242, 276-296, 313-333, 342-362, 374-394, and 404-424; these read LPLL…LAFL, RVIA…SALG, LTVL…LVGL, ALSI…GTSF, FLVF…ARIL, IALS…ALAV, LTSL…IFVV, FVTD…GVIF, LVSG…TNVA, GLLV…TVLV, LALG…LNIG, and IFAI…PLVL. Residues serine 817 and serine 819 each carry the phosphoserine modification.

The protein belongs to the monovalent cation:proton antiporter 2 (CPA2) transporter (TC 2.A.37) family. CHX (TC 2.A.37.4) subfamily. In terms of tissue distribution, predominantly expressed in epidermal and cortical cells of mature roots but also barely detected in leaves.

The protein resides in the membrane. Functionally, operates as a K(+)/H(+) antiporter that controls K(+) acquisition and homeostasis. The chain is Cation/H(+) antiporter 17 (CHX17) from Arabidopsis thaliana (Mouse-ear cress).